The chain runs to 902 residues: MASEASPSSSATRSEPPKDSPAEERGPASKEVSEVIESLKKKLAADRCISIKKRIDENKKNLFAITQSFMRSSMERGGSCKDGSDLLVKRQRDSPGMKSGIDESNNNRYVEDGPASSGMVQGSSVPVKISLRPIKMPDIKRLSPYTTWVFLDRNQRMTEDQSVVGRRRIYYDQTGGEALICSDSEEEAIDDEEEKRDFLEPEDYIIRMTLEQLGLSDSVLAELASFLSRSTSEIKARHGVLMKEKEVSESGDNQAESSLLNKDMEGALDSFDNLFCRRCLVFDCRLHGCSQDLIFPAEKPAPWCPPVDENLTCGANCYKTLLKSGRFPGYGTIEGKTGTSSDGAGTKTTPTKFSSKLNGRKPKTFPSESASSNEKCALETSDSENGLQQDTNSDKVSSSPKVKGSGRRVGRKRNKNRVAERVPRKTQKRQKKTEASDSDSIASGSCSPSDAKHKDNEDATSSSQKHVKSGNSGKSRKNGTPAEVSNNSVKDDVPVCQSNEVASELDAPGSDESLRKEEFMGETVSRGRLATNKLWRPLEKSLFDKGVEIFGMNSCLIARNLLSGFKSCWEVFQYMTCSENKASFFGGDGLNPDGSSKFDINGNMVNNQVRRRSRFLRRRGKVRRLKYTWKSAAYHSIRKRITEKKDQPCRQFNPCNCKIACGKECPCLLNGTCCEKYCGCPKSCKNRFRGCHCAKSQCRSRQCPCFAADRECDPDVCRNCWVIGGDGSLGVPSQRGDNYECRNMKLLLKQQQRVLLGISDVSGWGAFLKNSVSKHEYLGEYTGELISHKEADKRGKIYDRENCSFLFNLNDQFVLDAYRKGDKLKFANHSPEPNCYAKVIMVAGDHRVGIFAKERILAGEELFYDYRYEPDRAPAWAKKPEAPGSKKDENVTPSVGRPKKLA.

Low complexity predominate over residues 1 to 14; it reads MASEASPSSSATRS. Disordered stretches follow at residues 1–33, 73–107, and 335–522; these read MASE…KEVS, SMER…SNNN, and GKTG…FMGE. Composition is skewed to basic and acidic residues over residues 15-33 and 78-95; these read EPPK…KEVS and GSCK…RDSP. Over residues 337-357 the composition is skewed to polar residues; the sequence is TGTSSDGAGTKTTPTKFSSKL. Positions 394-403 are enriched in low complexity; the sequence is DKVSSSPKVK. Residues 404–416 show a composition bias toward basic residues; it reads GSGRRVGRKRNKN. A compositionally biased stretch (low complexity) spans 438 to 449; sequence SDSIASGSCSPS. Residues 459-473 show a composition bias toward polar residues; the sequence is ATSSSQKHVKSGNSG. The region spanning 531–581 is the SANT domain; it reads TNKLWRPLEKSLFDKGVEIFGMNSCLIARNLLSGFKSCWEVFQYMTCSENK. Positions 638 to 737 constitute a CXC domain; it reads RKRITEKKDQ…SLGVPSQRGD (100 aa). The SET domain maps to 752–867; the sequence is QRVLLGISDV…AGEELFYDYR (116 aa). Tyr-866 lines the S-adenosyl-L-methionine pocket. Positions 875 to 890 are enriched in basic and acidic residues; that stretch reads AWAKKPEAPGSKKDEN. The interval 875–902 is disordered; that stretch reads AWAKKPEAPGSKKDENVTPSVGRPKKLA.

This sequence belongs to the class V-like SAM-binding methyltransferase superfamily. Histone-lysine methyltransferase family. EZ subfamily. Probable component of a PcG complex. In plants, PcG complexes are probably composed of a member of the EZ family (CLF or MEA), FIE, and a member of the VEFS family (FIS2, VRN2 or EMF2). Interacts with FIE. Interacts with RING1A. Binds to ALP1. Interacts with BLI. Binds to ATX1 in the nucleus. Interacts with EOL1. Interacts (via SANT domain) with HXK1 in the nucleus. Strongly expressed throughout the apical meristem, leaf primordia, and leaves of 7-8 day-old seedling. Weakly expressed in the vasculature of hypocotyl. Strongly expressed throughout the young stages 1 and 2 floral meristems that arose on the flanks of the apex. In stage 3 and 4 flowers, it is expressed in the emerging sepal primordia and in the dome of the floral meristem. During stages 6 and 7, it is strongly expressed in developing petal and stamen, and weakly expressed in the sepals. Late in floral development, at stage 12, it is weakly expressed in all floral whorls, and expressed at intermediate level in petals and ovules.

It is found in the nucleus. The catalysed reaction is L-lysyl-[histone] + S-adenosyl-L-methionine = N(6)-methyl-L-lysyl-[histone] + S-adenosyl-L-homocysteine + H(+). Polycomb group (PcG) protein. Catalytic subunit of some PcG multiprotein complex, which methylates 'Lys-27' of histone H3, leading to transcriptional repression of the affected target genes, mainly abscisic acid (ABA) responsive elements. Required to regulate floral development by repressing the AGAMOUS homeotic gene in leaves, inflorescence stems and flowers. Together with ATX1, modulates AG nucleosome methylation statement. Regulates the antero-posterior organization of the endosperm, as well as the division and elongation rates of leaf cells. PcG proteins act by forming multiprotein complexes, which are required to maintain the transcriptionally repressive state of homeotic genes throughout development. PcG proteins are not required to initiate repression, but to maintain it during later stages of development. Forms a nuclear complex with EZA1/SWN and HXK1 to target common glucose-responsive genes and regulate glucose signaling by glucose-mediated gene repression. Affects the recruitment of HXK1 to the target chromatin. This Arabidopsis thaliana (Mouse-ear cress) protein is Histone-lysine N-methyltransferase CLF.